A 460-amino-acid polypeptide reads, in one-letter code: UDP-glycosyltransferase 74B1 (460 aa).

Histidine 22 (proton acceptor) is an active-site residue. Histidine 22 is an an anthocyanidin binding site. The Charge relay role is filled by aspartate 113. Threonine 135, glutamine 339, histidine 354, tryptophan 357, asparagine 358, serine 359, glutamate 362, aspartate 378, and glutamine 379 together coordinate UDP-alpha-D-glucose.

Belongs to the UDP-glycosyltransferase family. Expressed in the vasculature, the apical meristems of roots, shoots and inflorescence, and the junction of organ or branches.

It catalyses the reaction (Z)-2-phenyl-1-thioacetohydroximate + UDP-alpha-D-glucose = (Z)-desulfoglucotropeolin + UDP. The catalysed reaction is a (Z)-omega-(methylsulfanyl)alkyl-thiohydroximate + UDP-alpha-D-glucose = an aliphatic (Z)-desulfo-glucosinolate + UDP. The enzyme catalyses (Z)-2-(indol-3-yl)-1-thioacetohydroximate + UDP-alpha-D-glucose = (Z)-indolylmethyl desulfoglucosinolate + UDP. Involved in the biosynthesis of glucosinolate. In in vitro assay, may use phenylacetothiohydroximate (PATH), but not phenylacetic acid (PAA), indole-3-acetic acid (IAA) or salicylic acid (SA) as substrate. Specific for the thiohydroximate functional group and does not glucosylate the carboxylate group or a hydroxyl group. This chain is UDP-glycosyltransferase 74B1 (UGT74B1), found in Arabidopsis thaliana (Mouse-ear cress).